Here is a 91-residue protein sequence, read N- to C-terminus: Protein xpaR7 (91 aa).

The polypeptide is Protein xpaR7 (xpaR7) (Bacillus licheniformis).